A 186-amino-acid chain; its full sequence is Dynactin subunit 3 (186 aa).

A2 is subject to N-acetylalanine. Residues 135 to 157 (QQQDQCVEITEESKALLEEYNKT) are a coiled coil.

This sequence belongs to the dynactin subunit 3 family. In terms of assembly, subunit of dynactin, a multiprotein complex part of a tripartite complex with dynein and a adapter, such as BICDL1, BICD2 or HOOK3. The dynactin complex is built around ACTR1A/ACTB filament and consists of an actin-related filament composed of a shoulder domain, a pointed end and a barbed end. Its length is defined by its flexible shoulder domain. The soulder is composed of 2 DCTN1 subunits, 4 DCTN2 and 2 DCTN3. The 4 DCNT2 (via N-terminus) bind the ACTR1A filament and act as molecular rulers to determine the length. The pointed end is important for binding dynein-dynactin cargo adapters. Consists of 4 subunits: ACTR10, DCNT4, DCTN5 and DCTN6. The barbed end is composed of a CAPZA1:CAPZB heterodimers, which binds ACTR1A/ACTB filament and dynactin and stabilizes dynactin. As to expression, ubiquitously expressed. Highly expressed in muscle and pancreas and detected at lower levels in brain.

The protein localises to the cytoplasm. It is found in the cytoskeleton. Its subcellular location is the microtubule organizing center. It localises to the centrosome. The protein resides in the chromosome. The protein localises to the centromere. It is found in the kinetochore. Its subcellular location is the spindle. It localises to the cleavage furrow. The protein resides in the midbody. In terms of biological role, part of the dynactin complex that activates the molecular motor dynein for ultra-processive transport along microtubules. Together with dynein may be involved in spindle assembly and cytokinesis. This is Dynactin subunit 3 from Homo sapiens (Human).